Consider the following 249-residue polypeptide: 5'-nucleotidase SurE (249 aa).

Residues aspartate 8, aspartate 9, serine 39, and asparagine 91 each contribute to the a divalent metal cation site.

This sequence belongs to the SurE nucleotidase family. The cofactor is a divalent metal cation.

Its subcellular location is the cytoplasm. It catalyses the reaction a ribonucleoside 5'-phosphate + H2O = a ribonucleoside + phosphate. In terms of biological role, nucleotidase that shows phosphatase activity on nucleoside 5'-monophosphates. The polypeptide is 5'-nucleotidase SurE (Haemophilus influenzae (strain ATCC 51907 / DSM 11121 / KW20 / Rd)).